The chain runs to 883 residues: Kinesin-like protein 5 (883 aa).

The region spanning 6–390 is the Kinesin motor domain; sequence SITVTVRVRP…LKYANRAKNI (385 aa). Residue 144–151 participates in ATP binding; that stretch reads GATGCGKT. Coiled-coil stretches lie at residues 396–435 and 563–588; these read RNMI…SSQS and LQDE…VDEF. The tract at residues 755 to 785 is disordered; it reads VSPMLEDKPEPGLLIKSPLEKKQEVNSESTQ.

Belongs to the TRAFAC class myosin-kinesin ATPase superfamily. Kinesin family. Kinesin II subfamily. As to quaternary structure, heterodimer with klp6.

The protein localises to the cytoplasm. The protein resides in the cytoskeleton. Its subcellular location is the chromosome. It localises to the centromere. It is found in the kinetochore. The protein localises to the spindle. Has a role in establishing metaphase during mitosis. Required for chromosome segregation where it generates tension during kinetochore capturing. The polypeptide is Kinesin-like protein 5 (klp5) (Schizosaccharomyces pombe (strain 972 / ATCC 24843) (Fission yeast)).